The primary structure comprises 233 residues: Rab-like protein 3 (233 aa).

The interval 1–233 (MASLDRVKVL…RFNFKSLHSD (233 aa)) is small GTPase-like. GTP is bound by residues 16 to 21 (GVGKSS), 148 to 150 (KFD), and 179 to 180 (DC).

The protein belongs to the small GTPase superfamily. Rab family. As to quaternary structure, homodimer.

Functionally, required for KRAS signaling regulation and modulation of cell proliferation. Regulator of KRAS prenylation, and probably prenylation of other small GTPases. Required for lymphocyte development and function. Not required for myeloid cell development. This chain is Rab-like protein 3 (rabl3), found in Danio rerio (Zebrafish).